A 214-amino-acid chain; its full sequence is MLIAIEGVDGAGKRTLVEKLSGAFRAAGRSVATLAFPRYGQSVAADIAAEALHGEHGDLASSVYAMATLFALDRAGAVHTIQGLCRGYDVVILDRYVASNAAYSAARLHENAAGKAAAWVQRIEFARLGLPKPDWQVLLAVSAELAGERSRGRAQRDPGRARDNYERDAELQQRTGAVYAELAAQGWGGRWLVVGADVDPGRLAATLAPPDVPS.

7-14 (GVDGAGKR) contacts ATP. 7 residues coordinate dTMP: Asp9, Tyr39, Phe70, Arg74, Arg95, Asn100, and Tyr103. Asp9 provides a ligand contact to Mg(2+). Residues 147-159 (GERSRGRAQRDPG) are LID. 2 residues coordinate dTMP: Asp163 and Tyr165. Residue Glu166 coordinates Mg(2+).

It belongs to the thymidylate kinase family. As to quaternary structure, homodimer. Requires Mg(2+) as cofactor.

The catalysed reaction is dTMP + ATP = dTDP + ADP. It functions in the pathway pyrimidine metabolism; dTTP biosynthesis. Functionally, catalyzes the reversible phosphorylation of deoxythymidine monophosphate (dTMP) to deoxythymidine diphosphate (dTDP), using ATP as its preferred phosphoryl donor. Situated at the junction of both de novo and salvage pathways of deoxythymidine triphosphate (dTTP) synthesis, is essential for DNA synthesis and cellular growth. This is Thymidylate kinase (tmk) from Mycobacterium tuberculosis (strain CDC 1551 / Oshkosh).